Consider the following 173-residue polypeptide: Ribosome maturation factor RimM (173 aa).

A PRC barrel domain is found at 95–169 (PDEFYDHELE…TIVIDPPEGL (75 aa)).

Belongs to the RimM family. Binds ribosomal protein uS19.

It localises to the cytoplasm. Functionally, an accessory protein needed during the final step in the assembly of 30S ribosomal subunit, possibly for assembly of the head region. Essential for efficient processing of 16S rRNA. May be needed both before and after RbfA during the maturation of 16S rRNA. It has affinity for free ribosomal 30S subunits but not for 70S ribosomes. This is Ribosome maturation factor RimM from Mycolicibacterium smegmatis (strain ATCC 700084 / mc(2)155) (Mycobacterium smegmatis).